The primary structure comprises 494 residues: Glycogen synthase (494 aa).

Position 24 (Lys-24) interacts with ADP-alpha-D-glucose.

This sequence belongs to the glycosyltransferase 1 family. Bacterial/plant glycogen synthase subfamily.

It catalyses the reaction [(1-&gt;4)-alpha-D-glucosyl](n) + ADP-alpha-D-glucose = [(1-&gt;4)-alpha-D-glucosyl](n+1) + ADP + H(+). It functions in the pathway glycan biosynthesis; glycogen biosynthesis. In terms of biological role, synthesizes alpha-1,4-glucan chains using ADP-glucose. In Aromatoleum aromaticum (strain DSM 19018 / LMG 30748 / EbN1) (Azoarcus sp. (strain EbN1)), this protein is Glycogen synthase.